Here is a 200-residue protein sequence, read N- to C-terminus: NADH-quinone oxidoreductase subunit C (200 aa).

Belongs to the complex I 30 kDa subunit family. NDH-1 is composed of 14 different subunits. Subunits NuoB, C, D, E, F, and G constitute the peripheral sector of the complex.

Its subcellular location is the cell inner membrane. It catalyses the reaction a quinone + NADH + 5 H(+)(in) = a quinol + NAD(+) + 4 H(+)(out). NDH-1 shuttles electrons from NADH, via FMN and iron-sulfur (Fe-S) centers, to quinones in the respiratory chain. The immediate electron acceptor for the enzyme in this species is believed to be ubiquinone. Couples the redox reaction to proton translocation (for every two electrons transferred, four hydrogen ions are translocated across the cytoplasmic membrane), and thus conserves the redox energy in a proton gradient. This chain is NADH-quinone oxidoreductase subunit C, found in Rhizobium etli (strain ATCC 51251 / DSM 11541 / JCM 21823 / NBRC 15573 / CFN 42).